The primary structure comprises 344 residues: Dihydroorotase (344 aa).

Positions 13 and 15 each coordinate Zn(2+). Residues 15–17 and Asn41 contribute to the substrate site; that span reads HLR. Residues Lys98, His135, and His173 each coordinate Zn(2+). At Lys98 the chain carries N6-carboxylysine. Position 135 (His135) interacts with substrate. Leu218 is a substrate binding site. Asp247 lines the Zn(2+) pocket. Asp247 is an active-site residue. Substrate-binding residues include His251 and Ala263.

Belongs to the metallo-dependent hydrolases superfamily. DHOase family. Class II DHOase subfamily. As to quaternary structure, homodimer. Zn(2+) is required as a cofactor.

It carries out the reaction (S)-dihydroorotate + H2O = N-carbamoyl-L-aspartate + H(+). It functions in the pathway pyrimidine metabolism; UMP biosynthesis via de novo pathway; (S)-dihydroorotate from bicarbonate: step 3/3. Its function is as follows. Catalyzes the reversible cyclization of carbamoyl aspartate to dihydroorotate. This chain is Dihydroorotase, found in Neisseria gonorrhoeae (strain ATCC 700825 / FA 1090).